The sequence spans 391 residues: NADH-quinone oxidoreductase subunit D (391 aa).

The protein belongs to the complex I 49 kDa subunit family. In terms of assembly, NDH-1 is composed of 14 different subunits. Subunits NuoB, C, D, E, F, and G constitute the peripheral sector of the complex.

It is found in the cell inner membrane. The enzyme catalyses a quinone + NADH + 5 H(+)(in) = a quinol + NAD(+) + 4 H(+)(out). NDH-1 shuttles electrons from NADH, via FMN and iron-sulfur (Fe-S) centers, to quinones in the respiratory chain. The immediate electron acceptor for the enzyme in this species is believed to be ubiquinone. Couples the redox reaction to proton translocation (for every two electrons transferred, four hydrogen ions are translocated across the cytoplasmic membrane), and thus conserves the redox energy in a proton gradient. This chain is NADH-quinone oxidoreductase subunit D, found in Rickettsia conorii (strain ATCC VR-613 / Malish 7).